A 156-amino-acid polypeptide reads, in one-letter code: MIRVVATGTFDILHPGHLWYLEESAKLGDELYVIVARDANIRHKPRPVIPEEQRLVMVAALKPVTHAVLGDLEDMFRPIREIKPDIITLGCNQHFDPETLQKALEKQNIRAQVVRISEHSSSPFTSSRDIVRKIAELTHQRSQTRETKEQRECGAV.

Residues 9–10, 14–17, Asn92, and His119 contribute to the ATP site; these read TF and HPGH.

The protein belongs to the archaeal FAD synthase family. As to quaternary structure, homodimer. A divalent metal cation is required as a cofactor.

The catalysed reaction is FMN + ATP + H(+) = FAD + diphosphate. It participates in cofactor biosynthesis; FAD biosynthesis; FAD from FMN: step 1/1. Functionally, catalyzes the transfer of the AMP portion of ATP to flavin mononucleotide (FMN) to produce flavin adenine dinucleotide (FAD) coenzyme. The chain is FAD synthase from Methanospirillum hungatei JF-1 (strain ATCC 27890 / DSM 864 / NBRC 100397 / JF-1).